The following is a 64-amino-acid chain: DNA gyrase inhibitor YacG (64 aa).

Zn(2+) is bound by residues Cys7, Cys10, Cys26, and Cys30. A disordered region spans residues 44-64; sequence SIPGEPVVIANDDYNNEESDY.

This sequence belongs to the DNA gyrase inhibitor YacG family. As to quaternary structure, interacts with GyrB. Requires Zn(2+) as cofactor.

Functionally, inhibits all the catalytic activities of DNA gyrase by preventing its interaction with DNA. Acts by binding directly to the C-terminal domain of GyrB, which probably disrupts DNA binding by the gyrase. The sequence is that of DNA gyrase inhibitor YacG from Idiomarina loihiensis (strain ATCC BAA-735 / DSM 15497 / L2-TR).